The chain runs to 69 residues: Conotoxin Lt5.7 (69 aa).

Residues methionine 1–proline 19 form the signal peptide. A propeptide spanning residues lysine 20–alanine 54 is cleaved from the precursor.

It belongs to the conotoxin T superfamily. Post-translationally, contains 2 disulfide bonds that can be either 'C1-C3, C2-C4' or 'C1-C4, C2-C3', since these disulfide connectivities have been observed for conotoxins with cysteine framework V (for examples, see AC P0DQQ7 and AC P81755). Expressed by the venom duct.

It is found in the secreted. The chain is Conotoxin Lt5.7 from Conus litteratus (Lettered cone).